Consider the following 35-residue polypeptide: Photosystem II reaction center protein T (35 aa).

Residues 3-23 (ALVYTFLLVSTLGIIFFAIFF) form a helical membrane-spanning segment.

It belongs to the PsbT family. PSII is composed of 1 copy each of membrane proteins PsbA, PsbB, PsbC, PsbD, PsbE, PsbF, PsbH, PsbI, PsbJ, PsbK, PsbL, PsbM, PsbT, PsbY, PsbZ, Psb30/Ycf12, at least 3 peripheral proteins of the oxygen-evolving complex and a large number of cofactors. It forms dimeric complexes.

The protein resides in the plastid. The protein localises to the chloroplast thylakoid membrane. Its function is as follows. Found at the monomer-monomer interface of the photosystem II (PS II) dimer, plays a role in assembly and dimerization of PSII. PSII is a light-driven water plastoquinone oxidoreductase, using light energy to abstract electrons from H(2)O, generating a proton gradient subsequently used for ATP formation. The sequence is that of Photosystem II reaction center protein T from Citrus sinensis (Sweet orange).